Here is a 100-residue protein sequence, read N- to C-terminus: Large ribosomal subunit protein bL28 (100 aa).

It belongs to the bacterial ribosomal protein bL28 family.

This is Large ribosomal subunit protein bL28 from Ehrlichia ruminantium (strain Gardel).